The primary structure comprises 408 residues: Succinylornithine transaminase (408 aa).

Lysine 252 is modified (N6-(pyridoxal phosphate)lysine).

The protein belongs to the class-III pyridoxal-phosphate-dependent aminotransferase family. AstC subfamily. Pyridoxal 5'-phosphate serves as cofactor.

The enzyme catalyses N(2)-succinyl-L-ornithine + 2-oxoglutarate = N-succinyl-L-glutamate 5-semialdehyde + L-glutamate. It participates in amino-acid degradation; L-arginine degradation via AST pathway; L-glutamate and succinate from L-arginine: step 3/5. Catalyzes the transamination of N(2)-succinylornithine and alpha-ketoglutarate into N(2)-succinylglutamate semialdehyde and glutamate. Can also act as an acetylornithine aminotransferase. The polypeptide is Succinylornithine transaminase (Salmonella agona (strain SL483)).